Here is a 142-residue protein sequence, read N- to C-terminus: Large ribosomal subunit protein uL11 (142 aa).

It belongs to the universal ribosomal protein uL11 family. Part of the ribosomal stalk of the 50S ribosomal subunit. Interacts with L10 and the large rRNA to form the base of the stalk. L10 forms an elongated spine to which L12 dimers bind in a sequential fashion forming a multimeric L10(L12)X complex. In terms of processing, one or more lysine residues are methylated.

Its function is as follows. Forms part of the ribosomal stalk which helps the ribosome interact with GTP-bound translation factors. This chain is Large ribosomal subunit protein uL11, found in Mycolicibacterium vanbaalenii (strain DSM 7251 / JCM 13017 / BCRC 16820 / KCTC 9966 / NRRL B-24157 / PYR-1) (Mycobacterium vanbaalenii).